The sequence spans 56 residues: Genome polyprotein (56 aa).

Positions 1–30 (ETMLDRIASGDLESSVDDPRSAEDKRFESH) are disordered. Residues 17–30 (DDPRSAEDKRFESH) are compositionally biased toward basic and acidic residues.

It belongs to the picornaviridae polyprotein family. In terms of assembly, homopentamer. Homooligomer. As to quaternary structure, interacts with capsid protein VP2. Interacts with capsid protein VP3. In terms of processing, specific enzymatic cleavages by viral protease in vivo yield a variety of precursors and mature proteins. Polyprotein processing intermediates are produced, such as P1-2A which is a functional precursor of the structural proteins, VP0 which is a VP4-VP2 precursor, VP1-2A precursor, 3ABC precursor which is a stable and catalytically active precursor of 3A, 3B and 3C proteins, 3AB and 3CD precursors. The assembly signal 2A is removed from VP1-2A by a host protease, possibly host Cathepsin L. This cleavage occurs over a region of 3 amino-acids probably generating VP1 proteins with heterogeneous C-termini. Post-translationally, the assembly signal 2A is removed from VP1-2A by a host protease, possibly host Cathepsin L in naked virions. This cleavage does not occur in enveloped virions. This cleavage occurs over a region of 3 amino-acids probably generating VP1 proteins with heterogeneous C-termini.

The protein resides in the virion. The protein localises to the host endosome. Its subcellular location is the host multivesicular body. Capsid proteins VP1, VP2, and VP3 form a closed capsid enclosing the viral positive strand RNA genome. All these proteins contain a beta-sheet structure called beta-barrel jelly roll. Together they form an icosahedral capsid (T=3) composed of 60 copies of each VP1, VP2, and VP3, with a diameter of approximately 300 Angstroms. VP1 is situated at the 12 fivefold axes, whereas VP2 and VP3 are located at the quasi-sixfold axes. The naked capsid interacts with the host receptor HAVCR1 to provide virion attachment to and probably entry into the target cell. Its function is as follows. Precursor component of immature procapsids that corresponds to an extended form of the structural protein VP1. After maturation, possibly by the host Cathepsin L, the assembly signal 2A is cleaved to give rise to the mature VP1 protein. This is Genome polyprotein from Callithrix (Owl-faced monkey).